The chain runs to 312 residues: tRNA pseudouridine synthase B (312 aa).

Asp-46 (nucleophile) is an active-site residue. Substrate-binding residues include Tyr-74, Tyr-177, and Leu-198.

This sequence belongs to the pseudouridine synthase TruB family. Type 1 subfamily.

It carries out the reaction uridine(55) in tRNA = pseudouridine(55) in tRNA. Functionally, responsible for synthesis of pseudouridine from uracil-55 in the psi GC loop of transfer RNAs. This is tRNA pseudouridine synthase B from Buchnera aphidicola subsp. Schizaphis graminum (strain Sg).